A 294-amino-acid chain; its full sequence is 4-hydroxy-tetrahydrodipicolinate synthase (294 aa).

Ser-47 lines the pyruvate pocket. Catalysis depends on Tyr-135, which acts as the Proton donor/acceptor. The Schiff-base intermediate with substrate role is filled by Lys-163. Ile-205 contacts pyruvate.

Belongs to the DapA family. Homotetramer; dimer of dimers.

The protein localises to the cytoplasm. The enzyme catalyses L-aspartate 4-semialdehyde + pyruvate = (2S,4S)-4-hydroxy-2,3,4,5-tetrahydrodipicolinate + H2O + H(+). It functions in the pathway amino-acid biosynthesis; L-lysine biosynthesis via DAP pathway; (S)-tetrahydrodipicolinate from L-aspartate: step 3/4. Its function is as follows. Catalyzes the condensation of (S)-aspartate-beta-semialdehyde [(S)-ASA] and pyruvate to 4-hydroxy-tetrahydrodipicolinate (HTPA). The sequence is that of 4-hydroxy-tetrahydrodipicolinate synthase from Ralstonia nicotianae (strain ATCC BAA-1114 / GMI1000) (Ralstonia solanacearum).